Here is a 362-residue protein sequence, read N- to C-terminus: Large ribosomal subunit protein uL4A (362 aa).

S2 is modified (N-acetylserine). An Omega-N-methylarginine modification is found at R95. Residues 277 to 362 (PSHIISTSDV…AVFTETLKHD (86 aa)) are C-terminal-extended nuclear localization signal.

It belongs to the universal ribosomal protein uL4 family. Component of the large ribosomal subunit (LSU). Mature yeast ribosomes consist of a small (40S) and a large (60S) subunit. The 40S small subunit contains 1 molecule of ribosomal RNA (18S rRNA) and 33 different proteins (encoded by 57 genes). The large 60S subunit contains 3 rRNA molecules (25S, 5.8S and 5S rRNA) and 46 different proteins (encoded by 81 genes). uL4 is associated with the polypeptide exit tunnel. uL4 interacts with its chaperone ACL4 and the nuclear import receptor KAP104. In terms of processing, N-terminally acetylated by acetyltransferase NatA.

The protein resides in the cytoplasm. Its subcellular location is the nucleus. Its function is as follows. Component of the ribosome, a large ribonucleoprotein complex responsible for the synthesis of proteins in the cell. The small ribosomal subunit (SSU) binds messenger RNAs (mRNAs) and translates the encoded message by selecting cognate aminoacyl-transfer RNA (tRNA) molecules. The large subunit (LSU) contains the ribosomal catalytic site termed the peptidyl transferase center (PTC), which catalyzes the formation of peptide bonds, thereby polymerizing the amino acids delivered by tRNAs into a polypeptide chain. The nascent polypeptides leave the ribosome through a tunnel in the LSU and interact with protein factors that function in enzymatic processing, targeting, and the membrane insertion of nascent chains at the exit of the ribosomal tunnel. uL4 participates in the regulation of the accumulation of its own mRNA. The protein is Large ribosomal subunit protein uL4A of Saccharomyces cerevisiae (strain ATCC 204508 / S288c) (Baker's yeast).